We begin with the raw amino-acid sequence, 447 residues long: MLYRRWGSDKDFVISYTSSNESDKEIVEEVKLTLKAHVIELYLSNYISKDTAKKIIRAINSFKDYPSSGYEDVHEALEDYIIKNIGEEGGWVGLGRSRNDHVATALRLRTREYIFDIMEELYLLRKSLIEQAKKNLNTIMPSYTHFQPAQPTTLAHYFMYLEEELNTPWEALFNSLKLINRSPLGSGAIVGSNVKIDRKREAELLGFDDVLYNTISSTSSRIDFINAISSLTLLMLVLSRFAEDMILLSSMFVNIIKLPDSHVSTSSLMPQKRNSVTMEILRTKVGECYGDLSSLMMIYKGLPSGYNLDLQEMNKHYWNCIKHVIPSIHITRDIIQNIQIKNFGEIQGLTATDLAEEMAISGIPYRKAYIDVANKIKAGTFVAGISYTKSIENKKVIGSPNPSLLTQEIEIKEKRLNNQHEKFKQYKESVIEKMGQLGVIEDGLLQQ.

The protein belongs to the lyase 1 family. Argininosuccinate lyase subfamily.

It localises to the cytoplasm. It carries out the reaction 2-(N(omega)-L-arginino)succinate = fumarate + L-arginine. The protein operates within amino-acid biosynthesis; L-arginine biosynthesis; L-arginine from L-ornithine and carbamoyl phosphate: step 3/3. The protein is Argininosuccinate lyase of Sulfolobus acidocaldarius (strain ATCC 33909 / DSM 639 / JCM 8929 / NBRC 15157 / NCIMB 11770).